Here is a 432-residue protein sequence, read N- to C-terminus: tRNA(Ile)-lysidine synthase (432 aa).

19–24 (STGIDS) is an ATP binding site.

It belongs to the tRNA(Ile)-lysidine synthase family.

Its subcellular location is the cytoplasm. The enzyme catalyses cytidine(34) in tRNA(Ile2) + L-lysine + ATP = lysidine(34) in tRNA(Ile2) + AMP + diphosphate + H(+). Its function is as follows. Ligates lysine onto the cytidine present at position 34 of the AUA codon-specific tRNA(Ile) that contains the anticodon CAU, in an ATP-dependent manner. Cytidine is converted to lysidine, thus changing the amino acid specificity of the tRNA from methionine to isoleucine. In Staphylococcus epidermidis (strain ATCC 35984 / DSM 28319 / BCRC 17069 / CCUG 31568 / BM 3577 / RP62A), this protein is tRNA(Ile)-lysidine synthase.